The chain runs to 303 residues: Coenzyme PQQ synthesis protein B (303 aa).

This sequence belongs to the PqqB family.

It participates in cofactor biosynthesis; pyrroloquinoline quinone biosynthesis. Its function is as follows. May be involved in the transport of PQQ or its precursor to the periplasm. This chain is Coenzyme PQQ synthesis protein B, found in Pseudomonas putida (strain ATCC 47054 / DSM 6125 / CFBP 8728 / NCIMB 11950 / KT2440).